Here is a 172-residue protein sequence, read N- to C-terminus: Shikimate kinase (172 aa).

11–16 (GAGKST) is an ATP binding site. Serine 15 is a binding site for Mg(2+). 3 residues coordinate substrate: aspartate 33, arginine 57, and glycine 79. Position 117 (arginine 117) interacts with ATP. Arginine 136 lines the substrate pocket. Position 153 (arginine 153) interacts with ATP.

It belongs to the shikimate kinase family. In terms of assembly, monomer. Requires Mg(2+) as cofactor.

Its subcellular location is the cytoplasm. The catalysed reaction is shikimate + ATP = 3-phosphoshikimate + ADP + H(+). Its pathway is metabolic intermediate biosynthesis; chorismate biosynthesis; chorismate from D-erythrose 4-phosphate and phosphoenolpyruvate: step 5/7. Functionally, catalyzes the specific phosphorylation of the 3-hydroxyl group of shikimic acid using ATP as a cosubstrate. This chain is Shikimate kinase, found in Pseudomonas paraeruginosa (strain DSM 24068 / PA7) (Pseudomonas aeruginosa (strain PA7)).